The primary structure comprises 237 residues: Phosphoribosylaminoimidazole-succinocarboxamide synthase (237 aa).

Belongs to the SAICAR synthetase family.

It carries out the reaction 5-amino-1-(5-phospho-D-ribosyl)imidazole-4-carboxylate + L-aspartate + ATP = (2S)-2-[5-amino-1-(5-phospho-beta-D-ribosyl)imidazole-4-carboxamido]succinate + ADP + phosphate + 2 H(+). It functions in the pathway purine metabolism; IMP biosynthesis via de novo pathway; 5-amino-1-(5-phospho-D-ribosyl)imidazole-4-carboxamide from 5-amino-1-(5-phospho-D-ribosyl)imidazole-4-carboxylate: step 1/2. The polypeptide is Phosphoribosylaminoimidazole-succinocarboxamide synthase (Psychrobacter cryohalolentis (strain ATCC BAA-1226 / DSM 17306 / VKM B-2378 / K5)).